The chain runs to 234 residues: Adenosine 5'-phosphosulfate reductase (234 aa).

[4Fe-4S] cluster contacts are provided by Cys-120, Cys-121, Cys-203, and Cys-206. Catalysis depends on Cys-229, which acts as the Nucleophile; cysteine thiosulfonate intermediate.

It belongs to the PAPS reductase family. CysH subfamily. Requires [4Fe-4S] cluster as cofactor.

Its subcellular location is the cytoplasm. It catalyses the reaction [thioredoxin]-disulfide + sulfite + AMP + 2 H(+) = adenosine 5'-phosphosulfate + [thioredoxin]-dithiol. The protein operates within sulfur metabolism; hydrogen sulfide biosynthesis; sulfite from sulfate. Catalyzes the formation of sulfite from adenosine 5'-phosphosulfate (APS) using thioredoxin as an electron donor. This Bacillus cereus (strain AH187) protein is Adenosine 5'-phosphosulfate reductase.